A 301-amino-acid chain; its full sequence is Acetylglutamate kinase (301 aa).

Residues 72 to 73, Arg-94, and Asn-199 each bind substrate; that span reads GG.

Belongs to the acetylglutamate kinase family. ArgB subfamily.

It localises to the cytoplasm. The catalysed reaction is N-acetyl-L-glutamate + ATP = N-acetyl-L-glutamyl 5-phosphate + ADP. It functions in the pathway amino-acid biosynthesis; L-arginine biosynthesis; N(2)-acetyl-L-ornithine from L-glutamate: step 2/4. Its function is as follows. Catalyzes the ATP-dependent phosphorylation of N-acetyl-L-glutamate. The chain is Acetylglutamate kinase from Bartonella tribocorum (strain CIP 105476 / IBS 506).